The following is a 246-amino-acid chain: Myelin-oligodendrocyte glycoprotein (246 aa).

The N-terminal stretch at 1–28 is a signal peptide; sequence MACLWSFSWPSCFLSLLLLLLQLSCSYA. Topologically, residues 29-156 are extracellular; the sequence is GQFRVIGPGY…FYWVNPGVLT (128 aa). In terms of domain architecture, Ig-like V-type spans 31–144; the sequence is FRVIGPGYPI…EEAAMELKVE (114 aa). A disulfide bond links Cys52 and Cys126. Residue Asn59 is glycosylated (N-linked (GlcNAc...) asparagine). The chain crosses the membrane as a helical span at residues 157-177; the sequence is LIALVPTILLQVPVGLVFLFL. Over 178–209 the chain is Cytoplasmic; sequence QHRLRGKLRAEVENLHRTFDPHFLRVPCWKIT. Residues 210 to 230 form a helical membrane-spanning segment; that stretch reads LFVIVPVLGPLVALIICYNWL. The Extracellular portion of the chain corresponds to 231–246; it reads HRRLAGQFLEELRNPF.

The protein belongs to the immunoglobulin superfamily. BTN/MOG family. In terms of assembly, homodimer. As to expression, found exclusively in the CNS, where it is localized on the surface of myelin and oligodendrocyte cytoplasmic membranes. Reduced expression levels are observed in jimpy and quacking dysmyelinating mutant mice.

It localises to the membrane. In terms of biological role, minor component of the myelin sheath. May be involved in completion and/or maintenance of the myelin sheath and in cell-cell communication. Mediates homophilic cell-cell adhesion. This Mus musculus (Mouse) protein is Myelin-oligodendrocyte glycoprotein (Mog).